The chain runs to 223 residues: MAKVFRSGSTDLRLFENLSFQVMKGEMVAIVGDSGSGKSSLLHILGALDRPSDGDVYFAELRLAKLSEAAAAEFRNRELGFVWQFHYLLPEFTALENIAMPLLVRGLGRREAETEARHWLNEVGLLDRGHHRPGELSGGEQQRVALARALVTRPKVLMADEPTGDLDNRTAETVFNLIARLHRDYQLTSLIVTHNLAFARRCDRVIRLAAGVVDEVEPQSLPA.

The ABC transporter domain maps to 1-223 (MAKVFRSGST…DEVEPQSLPA (223 aa)). An ATP-binding site is contributed by 32 to 39 (GDSGSGKS).

It belongs to the ABC transporter superfamily. Lipoprotein translocase (TC 3.A.1.125) family. In terms of assembly, the complex is composed of two ATP-binding proteins (LolD) and two transmembrane proteins (LolC and LolE).

The protein resides in the cell inner membrane. In terms of biological role, part of the ABC transporter complex LolCDE involved in the translocation of mature outer membrane-directed lipoproteins, from the inner membrane to the periplasmic chaperone, LolA. Responsible for the formation of the LolA-lipoprotein complex in an ATP-dependent manner. The polypeptide is Lipoprotein-releasing system ATP-binding protein LolD (Koribacter versatilis (strain Ellin345)).